Consider the following 350-residue polypeptide: Anthranilate phosphoribosyltransferase (350 aa).

Residues Gly88, 91 to 92 (GD), Thr96, 98 to 101 (NIST), 116 to 124 (KHGGRSVSS), and Ser128 each bind 5-phospho-alpha-D-ribose 1-diphosphate. Gly88 provides a ligand contact to anthranilate. Residue Ser100 coordinates Mg(2+). Arg174 contacts anthranilate. Mg(2+) is bound by residues Asp233 and Glu234.

It belongs to the anthranilate phosphoribosyltransferase family. Homodimer. The cofactor is Mg(2+).

The catalysed reaction is N-(5-phospho-beta-D-ribosyl)anthranilate + diphosphate = 5-phospho-alpha-D-ribose 1-diphosphate + anthranilate. It participates in amino-acid biosynthesis; L-tryptophan biosynthesis; L-tryptophan from chorismate: step 2/5. Its function is as follows. Catalyzes the transfer of the phosphoribosyl group of 5-phosphorylribose-1-pyrophosphate (PRPP) to anthranilate to yield N-(5'-phosphoribosyl)-anthranilate (PRA). This chain is Anthranilate phosphoribosyltransferase, found in Albidiferax ferrireducens (strain ATCC BAA-621 / DSM 15236 / T118) (Rhodoferax ferrireducens).